A 329-amino-acid polypeptide reads, in one-letter code: Lipoyl synthase (329 aa).

Residues C55, C60, C66, C81, C85, C88, and S292 each coordinate [4Fe-4S] cluster. Positions 67–281 constitute a Radical SAM core domain; that stretch reads WEDREATFLI…RDEAEAIGFL (215 aa).

This sequence belongs to the radical SAM superfamily. Lipoyl synthase family. It depends on [4Fe-4S] cluster as a cofactor.

It is found in the cytoplasm. The enzyme catalyses [[Fe-S] cluster scaffold protein carrying a second [4Fe-4S](2+) cluster] + N(6)-octanoyl-L-lysyl-[protein] + 2 oxidized [2Fe-2S]-[ferredoxin] + 2 S-adenosyl-L-methionine + 4 H(+) = [[Fe-S] cluster scaffold protein] + N(6)-[(R)-dihydrolipoyl]-L-lysyl-[protein] + 4 Fe(3+) + 2 hydrogen sulfide + 2 5'-deoxyadenosine + 2 L-methionine + 2 reduced [2Fe-2S]-[ferredoxin]. It participates in protein modification; protein lipoylation via endogenous pathway; protein N(6)-(lipoyl)lysine from octanoyl-[acyl-carrier-protein]: step 2/2. Catalyzes the radical-mediated insertion of two sulfur atoms into the C-6 and C-8 positions of the octanoyl moiety bound to the lipoyl domains of lipoate-dependent enzymes, thereby converting the octanoylated domains into lipoylated derivatives. The chain is Lipoyl synthase from Leifsonia xyli subsp. xyli (strain CTCB07).